Here is a 243-residue protein sequence, read N- to C-terminus: tRNA (guanine-N(1)-)-methyltransferase (243 aa).

S-adenosyl-L-methionine is bound by residues Gly108 and 127 to 132 (LGDYVL).

Belongs to the RNA methyltransferase TrmD family. In terms of assembly, homodimer.

The protein resides in the cytoplasm. It carries out the reaction guanosine(37) in tRNA + S-adenosyl-L-methionine = N(1)-methylguanosine(37) in tRNA + S-adenosyl-L-homocysteine + H(+). In terms of biological role, specifically methylates guanosine-37 in various tRNAs. The sequence is that of tRNA (guanine-N(1)-)-methyltransferase from Streptococcus gordonii (strain Challis / ATCC 35105 / BCRC 15272 / CH1 / DL1 / V288).